Reading from the N-terminus, the 133-residue chain is Classical arabinogalactan protein 5 (133 aa).

The N-terminal stretch at 1 to 21 is a signal peptide; that stretch reads MASKSVVVFLFLALVASSVVA. Position 22 is a pyrrolidone carboxylic acid (Gln-22). Residues 23-110 are disordered; the sequence is APGPAPTISP…QSPLSGSPNA (88 aa). A compositionally biased stretch (pro residues) spans 25–37; it reads GPAPTISPLPATP. Low complexity predominate over residues 38–48; it reads TPSQSPRATAP. A compositionally biased stretch (pro residues) spans 49 to 81; that stretch reads APSPSANPPPSAPTTAPPVSQPPTESPPAPPTS. Residue Asn-109 is the site of GPI-anchor amidated asparagine attachment. Positions 110–133 are cleaved as a propeptide — removed in mature form; it reads AAAVSRVSLVGTFAGVAVIAALLL.

Belongs to the classical AGP family. O-glycosylated on the hydroxyproline residues. Expressed at a low level in flowers and siliques.

The protein localises to the cell membrane. Proteoglycan that seems to be implicated in diverse developmental roles such as differentiation, cell-cell recognition, embryogenesis and programmed cell death. This is Classical arabinogalactan protein 5 (AGP5) from Arabidopsis thaliana (Mouse-ear cress).